Reading from the N-terminus, the 99-residue chain is Putative protein YgeP (99 aa).

The protein is Putative protein YgeP (ygeP) of Escherichia coli (strain K12).